The primary structure comprises 229 residues: Heptaprenylglyceryl phosphate synthase (229 aa).

Residue Lys12 participates in sn-glycerol 1-phosphate binding. The Mg(2+) site is built by Asp14 and Thr40. Residues 159–164, Gly189, and 209–210 contribute to the sn-glycerol 1-phosphate site; these read YIEYSG and GN.

Belongs to the GGGP/HepGP synthase family. Group I subfamily. Homodimer. Mg(2+) serves as cofactor.

The catalysed reaction is sn-glycerol 1-phosphate + all-trans-heptaprenyl diphosphate = 3-heptaprenyl-sn-glycero-1-phosphate + diphosphate. Its pathway is membrane lipid metabolism; glycerophospholipid metabolism. In terms of biological role, prenyltransferase that catalyzes in vivo the transfer of the heptaprenyl moiety of heptaprenyl pyrophosphate (HepPP; 35 carbon atoms) to the C3 hydroxyl of sn-glycerol-1-phosphate (G1P), producing heptaprenylglyceryl phosphate (HepGP). This reaction is an ether-bond-formation step in the biosynthesis of archaea-type G1P-based membrane lipids found in Bacillales. This Staphylococcus saprophyticus subsp. saprophyticus (strain ATCC 15305 / DSM 20229 / NCIMB 8711 / NCTC 7292 / S-41) protein is Heptaprenylglyceryl phosphate synthase.